Reading from the N-terminus, the 345-residue chain is Dihydroorotase (345 aa).

Positions 14 and 16 each coordinate Zn(2+). Substrate contacts are provided by residues 16–18 (HLR) and N42. K100, H137, and H175 together coordinate Zn(2+). Residue K100 is modified to N6-carboxylysine. H137 contacts substrate. L220 serves as a coordination point for substrate. D248 contacts Zn(2+). D248 is an active-site residue. Substrate is bound by residues H252 and A264.

This sequence belongs to the metallo-dependent hydrolases superfamily. DHOase family. Class II DHOase subfamily. As to quaternary structure, homodimer. Zn(2+) serves as cofactor.

It carries out the reaction (S)-dihydroorotate + H2O = N-carbamoyl-L-aspartate + H(+). It participates in pyrimidine metabolism; UMP biosynthesis via de novo pathway; (S)-dihydroorotate from bicarbonate: step 3/3. Functionally, catalyzes the reversible cyclization of carbamoyl aspartate to dihydroorotate. The chain is Dihydroorotase from Nitrosococcus oceani (strain ATCC 19707 / BCRC 17464 / JCM 30415 / NCIMB 11848 / C-107).